The chain runs to 283 residues: Lectin-like protein At1g53080 (283 aa).

The first 23 residues, 1–23 (MQIHKLCIFVLFISLLSSKTISA), serve as a signal peptide directing secretion. A legume-lectin like region spans residues 24–277 (VKFNFNRFDG…RHDIWSWSFE (254 aa)). N-linked (GlcNAc...) asparagine glycosylation is found at asparagine 84 and asparagine 138. Serine 247 is modified (phosphoserine).

It belongs to the leguminous lectin family.

The protein resides in the secreted. It localises to the extracellular space. Its subcellular location is the apoplast. The protein is Lectin-like protein At1g53080 of Arabidopsis thaliana (Mouse-ear cress).